Here is a 367-residue protein sequence, read N- to C-terminus: uncharacterized protein (367 aa).

Positions 4–234 (LTFEHVKKSY…PANLFVAGFI (231 aa)) constitute an ABC transporter domain. An ATP-binding site is contributed by 36–43 (GPSGCGKS).

It belongs to the ABC transporter superfamily.

This is an uncharacterized protein from Bacillus subtilis (strain 168).